Here is a 450-residue protein sequence, read N- to C-terminus: MGKYFGTDGVRGEANLELTPELAFKLGRFGGYVLSQHETEAPKVFVGRDTRISGEMLESALVAGLLSVGIHVYKLGVLATPAVAYLVETEGASAGVMISASHNPALDNGIKFFGGDGFKLDDEKEAEIEALLDAEEDTLPRPSAEGLGILVDYPEGLRKYEGYLVSTGTPLDGMKVALDTANGAASTSARQIFADLGAQLTVIGETPDGLNINLNVGSTHPEALQEVVKESGSAIGLAFDGDSDRLIAVDENGDIVDGDKIMYIIGKYLSEKGQLAQNTIVTTVMSNLGFHKALNREGINKAVTAVGDRYVVEEMRKSGYNLGGEQSGHVILMDYNTTGDGQLSAVQLTKIMKETGKSLSELAAEVTIYPQKLVNIRVENVMKEKAMEVPAIKAIIEKMEEEMAGNGRILVRPSGTEPLLRVMAEAPTTEEVNYYVDTITDVVRAEIGID.

The active-site Phosphoserine intermediate is Ser-101. Ser-101, Asp-240, Asp-242, and Asp-244 together coordinate Mg(2+). Ser-101 bears the Phosphoserine mark.

It belongs to the phosphohexose mutase family. The cofactor is Mg(2+). Activated by phosphorylation.

The enzyme catalyses alpha-D-glucosamine 1-phosphate = D-glucosamine 6-phosphate. Functionally, catalyzes the conversion of glucosamine-6-phosphate to glucosamine-1-phosphate. In Streptococcus pneumoniae serotype 4 (strain ATCC BAA-334 / TIGR4), this protein is Phosphoglucosamine mutase.